A 309-amino-acid chain; its full sequence is CDK-activating kinase assembly factor MAT1 (309 aa).

Residues 6–50 form an RING-type zinc finger; the sequence is CPRCKTTKYRNPSLKLMVNVCGHTLCESCVELLFVRGSGSCQECD. The UIM domain maps to 142–161; that stretch reads REQEELEEALEMEKHENEQR.

Associates with CDK7 and cyclin H.

The protein resides in the nucleus. Functionally, stabilizes the cyclin H-CDK7 complex to form a functional CDK-activating kinase (CAK) enzymatic complex. This is CDK-activating kinase assembly factor MAT1 (mnat1) from Xenopus laevis (African clawed frog).